Here is a 323-residue protein sequence, read N- to C-terminus: Dehydrogenase/reductase SDR family member 7B (323 aa).

At 1-17 the chain is on the cytoplasmic side; it reads MISPSFRKGMLKERVMD. Residues 18-38 traverse the membrane as a helical; Signal-anchor for type II membrane protein segment; that stretch reads LASQTTILPLLFGCLGIFSLF. At 39–323 the chain is on the lumenal side; that stretch reads RLLQRIRSKA…ARKERKSKSS (285 aa). Serine 62 and leucine 64 together coordinate NAD(+). Serine 192 lines the substrate pocket. Residues tyrosine 205, lysine 209, and threonine 240 each contribute to the NAD(+) site. Tyrosine 205 (proton acceptor) is an active-site residue.

This sequence belongs to the short-chain dehydrogenases/reductases (SDR) family.

It localises to the endoplasmic reticulum membrane. Its function is as follows. Putative oxidoreductase. This chain is Dehydrogenase/reductase SDR family member 7B, found in Mus musculus (Mouse).